The primary structure comprises 282 residues: Ribosomal RNA small subunit methyltransferase A (282 aa).

S-adenosyl-L-methionine is bound by residues Asn-28, Leu-30, Gly-55, Glu-77, Asp-103, and Asn-123.

The protein belongs to the class I-like SAM-binding methyltransferase superfamily. rRNA adenine N(6)-methyltransferase family. RsmA subfamily.

It localises to the cytoplasm. The catalysed reaction is adenosine(1518)/adenosine(1519) in 16S rRNA + 4 S-adenosyl-L-methionine = N(6)-dimethyladenosine(1518)/N(6)-dimethyladenosine(1519) in 16S rRNA + 4 S-adenosyl-L-homocysteine + 4 H(+). Its function is as follows. Specifically dimethylates two adjacent adenosines (A1518 and A1519) in the loop of a conserved hairpin near the 3'-end of 16S rRNA in the 30S particle. May play a critical role in biogenesis of 30S subunits. This is Ribosomal RNA small subunit methyltransferase A from Afipia carboxidovorans (strain ATCC 49405 / DSM 1227 / KCTC 32145 / OM5) (Oligotropha carboxidovorans).